The chain runs to 284 residues: Pseudopaline exporter CntI (284 aa).

Helical transmembrane passes span 2 to 22 (VLDL…TFSV), 34 to 54 (LPAA…IYLL), 74 to 94 (GVMG…IPLA), 96 to 116 (ASIL…LFLG), 122 to 142 (AVYW…KPFS), 147 to 167 (SVYA…SVAI), 179 to 199 (IVFY…WSDF), 209 to 229 (GLLL…TRAF), 236 to 256 (IVAV…WLFW), and 259 to 279 (VPDA…IALS). 2 consecutive EamA domains span residues 8-138 (SGVL…LMIV) and 151-279 (VVGL…IALS).

This sequence belongs to the EamA transporter family.

It is found in the cell inner membrane. Transports the metallophore pseudopaline, which is involved in the acquisition of nickel and zinc, and thus enables bacterial growth inside the host, where metal access is limited. Is probably involved in the export of pseudopaline. The polypeptide is Pseudopaline exporter CntI (Pseudomonas aeruginosa (strain UCBPP-PA14)).